A 388-amino-acid polypeptide reads, in one-letter code: Large ribosomal subunit protein uL3B (388 aa).

The span at 1–10 (MSHCKFEQPR) shows a compositional bias: basic and acidic residues. The tract at residues 1–34 (MSHCKFEQPRHGSLGFLPRKRASRQRGKVKAFPK) is disordered. Over residues 18-31 (PRKRASRQRGKVKA) the composition is skewed to basic residues.

This sequence belongs to the universal ribosomal protein uL3 family. Component of the large ribosomal subunit (LSU). Mature yeast ribosomes consist of a small (40S) and a large (60S) subunit. The 40S small subunit contains 1 molecule of ribosomal RNA (18S rRNA) and at least 33 different proteins. The large 60S subunit contains 3 rRNA molecules (25S, 5.8S and 5S rRNA) and at least 46 different proteins. uL3 forms together with ES39L one of the contact sites for the signal recognition particle that targets ribosomes to the endoplasmic reticulum membrane.

It localises to the cytoplasm. Component of the ribosome, a large ribonucleoprotein complex responsible for the synthesis of proteins in the cell. The small ribosomal subunit (SSU) binds messenger RNAs (mRNAs) and translates the encoded message by selecting cognate aminoacyl-transfer RNA (tRNA) molecules. The large subunit (LSU) contains the ribosomal catalytic site termed the peptidyl transferase center (PTC), which catalyzes the formation of peptide bonds, thereby polymerizing the amino acids delivered by tRNAs into a polypeptide chain. The nascent polypeptides leave the ribosome through a tunnel in the LSU and interact with protein factors that function in enzymatic processing, targeting, and the membrane insertion of nascent chains at the exit of the ribosomal tunnel. uL3 plays a role in coordinating processes of accommodating the aminoacyl-tRNA in the PTC. This chain is Large ribosomal subunit protein uL3B (rpl302), found in Schizosaccharomyces pombe (strain 972 / ATCC 24843) (Fission yeast).